Reading from the N-terminus, the 297-residue chain is Light-independent protochlorophyllide reductase iron-sulfur ATP-binding protein (297 aa).

Residues 41 to 46 (GIGKST) and Lys70 contribute to the ATP site. Ser45 contributes to the Mg(2+) binding site. [4Fe-4S] cluster-binding residues include Cys126 and Cys160. Residues 211–212 (NR) and 235–237 (PDL) contribute to the ATP site.

This sequence belongs to the NifH/BchL/ChlL family. In terms of assembly, homodimer. Protochlorophyllide reductase is composed of three subunits; BchL, BchN and BchB. [4Fe-4S] cluster is required as a cofactor.

It catalyses the reaction chlorophyllide a + oxidized 2[4Fe-4S]-[ferredoxin] + 2 ADP + 2 phosphate = protochlorophyllide a + reduced 2[4Fe-4S]-[ferredoxin] + 2 ATP + 2 H2O. It participates in porphyrin-containing compound metabolism; bacteriochlorophyll biosynthesis (light-independent). In terms of biological role, component of the dark-operative protochlorophyllide reductase (DPOR) that uses Mg-ATP and reduced ferredoxin to reduce ring D of protochlorophyllide (Pchlide) to form chlorophyllide a (Chlide). This reaction is light-independent. The L component serves as a unique electron donor to the NB-component of the complex, and binds Mg-ATP. This Methylorubrum extorquens (strain CM4 / NCIMB 13688) (Methylobacterium extorquens) protein is Light-independent protochlorophyllide reductase iron-sulfur ATP-binding protein.